Here is a 371-residue protein sequence, read N- to C-terminus: O-antigen chain mannosyltransferase C (371 aa).

It belongs to the glycosyltransferase group 1 family. Glycosyltransferase 4 subfamily.

It catalyses the reaction N-acetyl-alpha-D-glucosaminyl-di-trans,octa-cis-undecaprenyl diphosphate + GDP-alpha-D-mannose = alpha-D-mannosyl-(1-&gt;3)-N-acetyl-alpha-D-glucosaminyl-di-trans,octa-cis-undecaprenyl diphosphate + GDP + H(+). Its pathway is bacterial outer membrane biogenesis; LPS O-antigen biosynthesis. Functionally, mannosyltransferase involved in the biosynthesis of the repeat unit of the lipopolysaccharide (LPS) O-antigen region. Catalyzes the transfer of a single alpha-(1-&gt;3)-linked mannose residue to the acceptor N-acetyl-glucosaminyl-diphospho-undecaprenol during the synthesis of the adapter region. The sequence is that of O-antigen chain mannosyltransferase C from Escherichia coli.